The chain runs to 462 residues: Spermatogenesis- and oogenesis-specific basic helix-loop-helix-containing protein 2 (462 aa).

In terms of domain architecture, bHLH spans 200–251; the sequence is KASFLHSSKEKLRRERIKFCCEQLRTLLPYVKGRKSDVASVIEATVDYVKQV. The disordered stretch occupies residues 422–462; that stretch reads PASSRTASSSIFRGFRESDSGHQASQQPTGPSLQPQDSSYF. A compositionally biased stretch (polar residues) spans 442–462; sequence GHQASQQPTGPSLQPQDSSYF.

The protein localises to the nucleus. Functionally, probable transcription factor, which may be involved in spermatogenesis and oogenesis. This Rattus norvegicus (Rat) protein is Spermatogenesis- and oogenesis-specific basic helix-loop-helix-containing protein 2 (Sohlh2).